The primary structure comprises 444 residues: UDP-N-acetylmuramoylalanine--D-glutamate ligase (444 aa).

ATP is bound at residue 109–115 (GSNGKTT).

The protein belongs to the MurCDEF family.

Its subcellular location is the cytoplasm. It catalyses the reaction UDP-N-acetyl-alpha-D-muramoyl-L-alanine + D-glutamate + ATP = UDP-N-acetyl-alpha-D-muramoyl-L-alanyl-D-glutamate + ADP + phosphate + H(+). Its pathway is cell wall biogenesis; peptidoglycan biosynthesis. Cell wall formation. Catalyzes the addition of glutamate to the nucleotide precursor UDP-N-acetylmuramoyl-L-alanine (UMA). The sequence is that of UDP-N-acetylmuramoylalanine--D-glutamate ligase from Bacteroides fragilis (strain ATCC 25285 / DSM 2151 / CCUG 4856 / JCM 11019 / LMG 10263 / NCTC 9343 / Onslow / VPI 2553 / EN-2).